The sequence spans 568 residues: Zinc finger protein 768 (568 aa).

Residues 1–16 (MEREASSWGLESRDVH) are compositionally biased toward basic and acidic residues. Disordered regions lie at residues 1–223 (MERE…SLGV), 228–247 (SFTQ…FDMP), and 264–287 (LNLT…QGPR). A phosphoserine mark is found at Ser-17, Ser-23, and Ser-27. Thr-35 carries the post-translational modification Phosphothreonine. Phosphoserine occurs at positions 36, 65, 72, 79, 86, 93, 100, 107, 114, 121, 128, 135, and 149. Positions 62 to 80 (EPQSPEFEPQSPEFESQSP) are enriched in low complexity. Residues 110–122 (SDPQSPEFESQSP) are compositionally biased toward polar residues. Tyr-152 carries the post-translational modification Phosphotyrosine. Ser-154 carries the post-translational modification Phosphoserine. The span at 159 to 186 (FESQSPGYESQSPGYEPQNSGDGVQNSE) shows a compositional bias: polar residues. Residue Thr-189 is modified to Phosphothreonine. The residue at position 191 (Ser-191) is a Phosphoserine. The C2H2-type 1 zinc finger occupies 289–311 (NICGICGKSFGRGSTLIQHQRIH). The residue at position 312 (Thr-312) is a Phosphothreonine. Position 317 is a phosphotyrosine (Tyr-317). 4 C2H2-type zinc fingers span residues 317–339 (YKCE…QRTH), 345–367 (YKCP…QRTH), 373–395 (YKCP…QRTH), and 401–423 (YSCP…QRVH). Phosphoserine is present on residues Ser-323 and Ser-327. Phosphothreonine is present on Thr-424. C2H2-type zinc fingers lie at residues 429–451 (FSCG…ARSH), 457–479 (FKCP…ARTH), 485–507 (YSCP…QRSH), 513–535 (YRCA…HRVH), and 541–563 (YKCD…QRTH). A Phosphoserine modification is found at Ser-470.

The protein belongs to the krueppel C2H2-type zinc-finger protein family. Interacts (via zinc-finger domains) with TP53 (via N-terminus); interaction might be facilitated by TP53 oligomerization state. Interacts with ELP3. Post-translationally, may be phosphorylated at residue 'Ser-5' of the tandem heptapeptide repeats in the N-terminus. Phosphorylation might be increased upon RAS pathway activation and negatively regulate protein stability.

The protein resides in the nucleus. Its subcellular location is the chromosome. Binds to mammalian-wide interspersed repeat (MIRs) sequences in euchromatin and promoter regions of genes at the consensus sequence 5'-GCTGTGTG-[N20]-CCTCTCTG-3', consisting of two anchor regions connected by a linker region; the linker region probably does not contribute to the binding specificity. Required for cell homeostasis. May be involved in transcriptional regulation. This chain is Zinc finger protein 768 (Znf768), found in Mus musculus (Mouse).